The chain runs to 357 residues: Prostaglandin D2 receptor (357 aa).

Residues Met-1–Thr-20 are Extracellular-facing. Residue Asn-2 is glycosylated (N-linked (GlcNAc...) asparagine). A helical transmembrane segment spans residues Met-21 to Ala-41. The Cytoplasmic portion of the chain corresponds to Arg-42–Ser-58. A helical transmembrane segment spans residues Val-59 to Ser-79. The Extracellular segment spans residues Pro-80–Thr-106. A glycan (N-linked (GlcNAc...) asparagine) is linked at Asn-89. A disulfide bridge links Cys-104 with Cys-182. Residues Phe-107–Val-127 form a helical membrane-spanning segment. Topologically, residues Glu-128–Val-149 are cytoplasmic. Residues Leu-150 to Phe-170 form a helical membrane-spanning segment. The Extracellular segment spans residues Gly-171–Ser-194. Residues Val-195–Val-215 form a helical membrane-spanning segment. Over Cys-216–Asp-261 the chain is Cytoplasmic. A helical transmembrane segment spans residues His-262–Tyr-282. At Arg-283 to Arg-306 the chain is on the extracellular side. Residues Phe-307–Phe-327 form a helical membrane-spanning segment. Topologically, residues Arg-328–Leu-357 are cytoplasmic.

The protein belongs to the G-protein coupled receptor 1 family. As to expression, most abundantly expressed in the ileum, followed by lung, stomach and uterus.

The protein resides in the cell membrane. Its function is as follows. Receptor for prostaglandin D2 (PGD2). The activity of this receptor is mainly mediated by G(s) proteins that stimulate adenylate cyclase, resulting in an elevation of intracellular cAMP. A mobilization of calcium is also observed, but without formation of inositol 1,4,5-trisphosphate. Involved in PLA2G3-dependent maturation of mast cells. PLA2G3 is secreted by immature mast cells and acts on nearby fibroblasts upstream to PTDGS to synthesize PGD2, which in turn promotes mast cell maturation and degranulation via PTGDR. The chain is Prostaglandin D2 receptor (Ptgdr) from Mus musculus (Mouse).